A 124-amino-acid chain; its full sequence is uncharacterized protein (124 aa).

It is found in the cytoplasm. Its subcellular location is the nucleus. This is an uncharacterized protein from Schizosaccharomyces pombe (strain 972 / ATCC 24843) (Fission yeast).